A 170-amino-acid chain; its full sequence is Adenine phosphoribosyltransferase (170 aa).

It belongs to the purine/pyrimidine phosphoribosyltransferase family. As to quaternary structure, homodimer.

Its subcellular location is the cytoplasm. It carries out the reaction AMP + diphosphate = 5-phospho-alpha-D-ribose 1-diphosphate + adenine. The protein operates within purine metabolism; AMP biosynthesis via salvage pathway; AMP from adenine: step 1/1. Catalyzes a salvage reaction resulting in the formation of AMP, that is energically less costly than de novo synthesis. The polypeptide is Adenine phosphoribosyltransferase (Bacillus subtilis (strain 168)).